A 668-amino-acid polypeptide reads, in one-letter code: NADH-ubiquinone oxidoreductase chain 5 (668 aa).

18 helical membrane-spanning segments follow: residues 1-21 (MYII…LFGH), 31-51 (IAVG…YEIL), 81-101 (LTSI…LYSM), 111-131 (TRFF…VTAD), 133-153 (FVQL…LINF), 178-198 (LFFG…SVIF), 211-231 (LLGY…IGVV), 251-271 (TPVS…FLVL), 283-303 (ILNI…TIGI), 311-331 (VIAY…GLLN), 339-359 (LTTH…VIHG), 375-395 (LMPL…GFPF), 421-441 (AIIG…LLIL), 462-482 (TNMV…GYLT), 519-539 (LLPL…YFNL), 566-586 (FDFL…YDVM), 629-649 (IVQA…IGFL), and 650-668 (YVEL…PKIK).

The protein belongs to the complex I subunit 5 family.

It is found in the mitochondrion inner membrane. It catalyses the reaction a ubiquinone + NADH + 5 H(+)(in) = a ubiquinol + NAD(+) + 4 H(+)(out). Core subunit of the mitochondrial membrane respiratory chain NADH dehydrogenase (Complex I) that is believed to belong to the minimal assembly required for catalysis. Complex I functions in the transfer of electrons from NADH to the respiratory chain. The immediate electron acceptor for the enzyme is believed to be ubiquinone. The polypeptide is NADH-ubiquinone oxidoreductase chain 5 (nad5) (Dictyostelium citrinum (Slime mold)).